The chain runs to 87 residues: Conotoxin Bt15a (87 aa).

An N-terminal signal peptide occupies residues 1 to 23 (MEKLTILVLVATVLLAIQVLVQS). A propeptide spanning residues 24–49 (DGEKPLKRRVKQYAAKRLSALMRGPR) is cleaved from the precursor. Q50 is subject to Pyrrolidone carboxylic acid.

It belongs to the conotoxin O2 superfamily. Contains 4 disulfide bonds. Expressed by the venom duct.

It localises to the secreted. The sequence is that of Conotoxin Bt15a from Conus betulinus (Beech cone).